A 495-amino-acid polypeptide reads, in one-letter code: Glutamyl-tRNA(Gln) amidotransferase subunit A (495 aa).

Residues lysine 78 and serine 158 each act as charge relay system in the active site. Serine 182 functions as the Acyl-ester intermediate in the catalytic mechanism.

The protein belongs to the amidase family. GatA subfamily. In terms of assembly, heterotrimer of A, B and C subunits.

It carries out the reaction L-glutamyl-tRNA(Gln) + L-glutamine + ATP + H2O = L-glutaminyl-tRNA(Gln) + L-glutamate + ADP + phosphate + H(+). Functionally, allows the formation of correctly charged Gln-tRNA(Gln) through the transamidation of misacylated Glu-tRNA(Gln) in organisms which lack glutaminyl-tRNA synthetase. The reaction takes place in the presence of glutamine and ATP through an activated gamma-phospho-Glu-tRNA(Gln). The chain is Glutamyl-tRNA(Gln) amidotransferase subunit A from Dinoroseobacter shibae (strain DSM 16493 / NCIMB 14021 / DFL 12).